The sequence spans 197 residues: MTNRDIVWHEASITKEEYQQKNKHKSSILWLTGLSGSGKSTIANAAARELFEQGYQVIVLDGDNIRHGLNRDLGFSDEDRKENIRRIGEVAKLFVQQGTIVITAFISPFREDRQQVRELVEAGEFNEVYIKCDLDICEQRDPKGLYKKARNGEIPFFTGIDSPYEEPEAPELVLDSGQHDREACKNQLIEFVKQKLS.

33-40 (GLSGSGKS) serves as a coordination point for ATP. The Phosphoserine intermediate role is filled by S107.

The protein belongs to the APS kinase family.

The catalysed reaction is adenosine 5'-phosphosulfate + ATP = 3'-phosphoadenylyl sulfate + ADP + H(+). It functions in the pathway sulfur metabolism; hydrogen sulfide biosynthesis; sulfite from sulfate: step 2/3. In terms of biological role, catalyzes the synthesis of activated sulfate. This Bacillus subtilis (strain 168) protein is Probable adenylyl-sulfate kinase (cysC).